We begin with the raw amino-acid sequence, 55 residues long: Large ribosomal subunit protein bL33 (55 aa).

It belongs to the bacterial ribosomal protein bL33 family.

The protein is Large ribosomal subunit protein bL33 of Parvibaculum lavamentivorans (strain DS-1 / DSM 13023 / NCIMB 13966).